The chain runs to 78 residues: MLIVILTCALLVIYHAAAAEELEAKDVIESKALATLDEERFECVLKCDIQYNGKNCKGKGENKCSGGWRCRFKLCLKI.

Positions 1-19 (MLIVILTCALLVIYHAAAA) are cleaved as a signal peptide. The propeptide occupies 20–40 (EELEAKDVIESKALATLDEER). 3 disulfides stabilise this stretch: Cys-43–Cys-56, Cys-47–Cys-70, and Cys-64–Cys-75.

This sequence belongs to the neurotoxin 12 (Hwtx-2) family. 05 (OAIP-5) subfamily. Expressed by the venom gland.

Its subcellular location is the secreted. Its function is as follows. Probable ion channel inhibitor. Shows insecticidal activity when injected into mealworms. This Selenotypus plumipes (Australian featherleg tarantula) protein is Toxin OAIP 5.